We begin with the raw amino-acid sequence, 629 residues long: Polyadenylate-binding protein, cytoplasmic and nuclear (629 aa).

Residues 1–11 show a composition bias toward polar residues; the sequence is MSAAETNQLQE. The disordered stretch occupies residues 1-48; it reads MSAAETNQLQESMEKLNIGSTTEEQSAAAATTTADQSAEEQGESSGVA. Residues 20–36 are compositionally biased toward low complexity; the sequence is STTEEQSAAAATTTADQ. RRM domains lie at 52-130, 140-217, 233-310, and 336-413; these read ASLY…WSQR, GNIF…KHIS, TNIY…RAQK, and VNLF…LAQR. The segment at 503 to 534 is disordered; the sequence is PPQFQQDFNGQNMRPQQQQQQQPRGGYYPNRN. Over residues 505-517 the composition is skewed to polar residues; that stretch reads QFQQDFNGQNMRP. The PABC domain maps to 537–618; it reads SKRDLAAIIS…ALTAFEEYKK (82 aa).

Belongs to the polyadenylate-binding protein type-1 family.

The protein resides in the cytoplasm. It localises to the nucleus. Its function is as follows. Binds the poly(A) tail of mRNA. Appears to be an important mediator of the multiple roles of the poly(A) tail in mRNA biogenesis, stability and translation. In the nucleus, involved in both mRNA cleavage and polyadenylation. Is also required for efficient mRNA export to the cytoplasm. Acts in concert with a poly(A)-specific nuclease (PAN) to affect poly(A) tail shortening, which may occur concomitantly with either nucleocytoplasmic mRNA transport or translational initiation. In the cytoplasm, stimulates translation initiation and regulates mRNA decay through translation termination-coupled poly(A) shortening, probably mediated by PAN. The sequence is that of Polyadenylate-binding protein, cytoplasmic and nuclear (PAB1) from Candida albicans (strain SC5314 / ATCC MYA-2876) (Yeast).